The chain runs to 120 residues: Immunoglobulin kappa variable 2-29 (120 aa).

The first 20 residues, 1–20 (MRLPAQLLGLLMLWIPGSSA), serve as a signal peptide directing secretion. Residues 21 to 43 (DIVMTQTPLSLSVTPGQPASISC) form a framework-1 region. In terms of domain architecture, Ig-like spans 21–120 (DIVMTQTPLS…YYCMQGIHLP (100 aa)). Residues Cys-43 and Cys-113 are joined by a disulfide bond. Positions 44 to 59 (KSSQSLLHSDGKTYLY) are complementarity-determining-1. The framework-2 stretch occupies residues 60–74 (WYLQKPGQSPQLLIY). The interval 75–81 (EVSSRFS) is complementarity-determining-2. A framework-3 region spans residues 82–113 (GVPDRFSGSGSGTDFTLKISRVEAEDVGVYYC). Positions 114–120 (MQGIHLP) are complementarity-determining-3.

In terms of assembly, immunoglobulins are composed of two identical heavy chains and two identical light chains; disulfide-linked.

It is found in the secreted. It localises to the cell membrane. V region of the variable domain of immunoglobulin light chains that participates in the antigen recognition. Immunoglobulins, also known as antibodies, are membrane-bound or secreted glycoproteins produced by B lymphocytes. In the recognition phase of humoral immunity, the membrane-bound immunoglobulins serve as receptors which, upon binding of a specific antigen, trigger the clonal expansion and differentiation of B lymphocytes into immunoglobulins-secreting plasma cells. Secreted immunoglobulins mediate the effector phase of humoral immunity, which results in the elimination of bound antigens. The antigen binding site is formed by the variable domain of one heavy chain, together with that of its associated light chain. Thus, each immunoglobulin has two antigen binding sites with remarkable affinity for a particular antigen. The variable domains are assembled by a process called V-(D)-J rearrangement and can then be subjected to somatic hypermutations which, after exposure to antigen and selection, allow affinity maturation for a particular antigen. The chain is Immunoglobulin kappa variable 2-29 from Homo sapiens (Human).